We begin with the raw amino-acid sequence, 401 residues long: Tyrosine--tRNA ligase (401 aa).

Positions 41-50 (PSRPDLHLGH) match the 'HIGH' region motif. The 'KMSKS' region signature appears at 225–229 (KMSKS). Lys-228 provides a ligand contact to ATP. Residues 334 to 395 (KNIVDLLVEI…GKRKFYRISG (62 aa)) enclose the S4 RNA-binding domain.

This sequence belongs to the class-I aminoacyl-tRNA synthetase family. TyrS type 2 subfamily. Homodimer.

The protein localises to the cytoplasm. It catalyses the reaction tRNA(Tyr) + L-tyrosine + ATP = L-tyrosyl-tRNA(Tyr) + AMP + diphosphate + H(+). In terms of biological role, catalyzes the attachment of tyrosine to tRNA(Tyr) in a two-step reaction: tyrosine is first activated by ATP to form Tyr-AMP and then transferred to the acceptor end of tRNA(Tyr). This chain is Tyrosine--tRNA ligase, found in Thermotoga maritima (strain ATCC 43589 / DSM 3109 / JCM 10099 / NBRC 100826 / MSB8).